The chain runs to 666 residues: Probable potassium transport system protein Kup (666 aa).

12 helical membrane-spanning segments follow: residues 16–36, 58–78, 100–120, 141–161, 165–185, 221–241, 253–273, 292–312, 343–363, 373–393, 399–419, and 424–444; these read GFII…LYTM, ISLI…LIAL, PWLI…GALT, IYQN…VLFG, FGTG…FSFL, IFIL…YSDL, WPFV…WILA, LTVY…QALI, LYIP…VLYF, YGLA…YYLI, PFLA…FFWA, and FMHG…VMFI.

Belongs to the HAK/KUP transporter (TC 2.A.72) family.

The protein localises to the cell membrane. The enzyme catalyses K(+)(in) + H(+)(in) = K(+)(out) + H(+)(out). Functionally, transport of potassium into the cell. Likely operates as a K(+):H(+) symporter. The protein is Probable potassium transport system protein Kup of Streptococcus pyogenes serotype M18 (strain MGAS8232).